The primary structure comprises 327 residues: tRNA dimethylallyltransferase (327 aa).

Position 14 to 21 (14 to 21) interacts with ATP; sequence GPTASGKT. Residue 16-21 participates in substrate binding; that stretch reads TASGKT. Interaction with substrate tRNA stretches follow at residues 39 to 42 and 163 to 167; these read DSAL and QRIQR.

Belongs to the IPP transferase family. As to quaternary structure, monomer. It depends on Mg(2+) as a cofactor.

It carries out the reaction adenosine(37) in tRNA + dimethylallyl diphosphate = N(6)-dimethylallyladenosine(37) in tRNA + diphosphate. Its function is as follows. Catalyzes the transfer of a dimethylallyl group onto the adenine at position 37 in tRNAs that read codons beginning with uridine, leading to the formation of N6-(dimethylallyl)adenosine (i(6)A). This is tRNA dimethylallyltransferase from Xanthomonas axonopodis pv. citri (strain 306).